A 269-amino-acid polypeptide reads, in one-letter code: 5'-nucleotidase SurE (269 aa).

Residues aspartate 8, aspartate 9, serine 40, and asparagine 93 each contribute to the a divalent metal cation site.

Belongs to the SurE nucleotidase family. The cofactor is a divalent metal cation.

The protein localises to the cytoplasm. The catalysed reaction is a ribonucleoside 5'-phosphate + H2O = a ribonucleoside + phosphate. Nucleotidase that shows phosphatase activity on nucleoside 5'-monophosphates. This Caulobacter sp. (strain K31) protein is 5'-nucleotidase SurE.